Consider the following 368-residue polypeptide: C-X-C chemokine receptor type 3 (368 aa).

The Extracellular portion of the chain corresponds to 1–53 (MVLEVSDHQVLNDAEVAALLENFSSSYDYGENESDSCCTSPPCPQDFSLNFDR). N22 is a glycosylation site (N-linked (GlcNAc...) asparagine). Y27 and Y29 each carry sulfotyrosine. A glycan (N-linked (GlcNAc...) asparagine) is linked at N32. Residues 54 to 80 (AFLPALYSLLFLLGLLGNGAVAAVLLS) traverse the membrane as a helical segment. The Cytoplasmic segment spans residues 81–89 (RRTALSSTD). Residues 90-110 (TFLLHLAVADTLLVLTLPLWA) traverse the membrane as a helical segment. The Extracellular portion of the chain corresponds to 111-125 (VDAAVQWVFGSGLCK). C124 and C203 are oxidised to a cystine. Residues 126–147 (VAGALFNINFYAGALLLACISF) traverse the membrane as a helical segment. The Cytoplasmic segment spans residues 148–169 (DRYLNIVHATQLYRRGPPARVT). Residues 170-189 (LTCLAVWGLCLLFALPDFIF) form a helical membrane-spanning segment. At 190–212 (LSAHHDERLNATHCQYNFPQVGR) the chain is on the extracellular side. Residues 213–233 (TALRVLQLVAGFLLPLLVMAY) traverse the membrane as a helical segment. Topologically, residues 234–255 (CYAHILAVLLVSRGQRRLRAMR) are cytoplasmic. A helical membrane pass occupies residues 256–277 (LVVVVVVAFALCWTPYHLVVLV). The Extracellular portion of the chain corresponds to 278 to 298 (DILMDLGALARNCGRESRVDV). A helical transmembrane segment spans residues 299 to 321 (AKSVTSGLGYMHCCLNPLLYAFV). The Cytoplasmic segment spans residues 322–368 (GVKFRERMWMLLLRLGCPNQRGLQRQPSSSRRDSSWSETSEASYSGL). The tract at residues 342-368 (RGLQRQPSSSRRDSSWSETSEASYSGL) is disordered. Low complexity predominate over residues 357–368 (WSETSEASYSGL).

This sequence belongs to the G-protein coupled receptor 1 family. In terms of assembly, homomer. Forms heteromers with ACKR4. As to quaternary structure, interacts with PF4/CXCL4. In terms of processing, sulfation on Tyr-27 and Tyr-29 is essential for CXCL10 binding and subsequent signal transduction induction. N-glycosylated. Isoform 1 and isoform 2 are mainly expressed in heart, kidney, liver and skeletal muscle. Isoform 1 is also expressed in placenta. Isoform 2 is expressed in endothelial cells. Expressed in T-cells (at protein level).

It localises to the cell membrane. Receptor for the C-X-C chemokine CXCL9, CXCL10 and CXCL11 and mediates the proliferation, survival and angiogenic activity of human mesangial cells (HMC) through a heterotrimeric G-protein signaling pathway. Binds to CCL21. Probably promotes cell chemotaxis response. Upon activation by PF4, induces activated T-lymphocytes migration mediated via downstream Ras/extracellular signal-regulated kinase (ERK) signaling. Its function is as follows. Receptor for the C-X-C chemokine CXCL4 and also mediates the inhibitory activities of CXCL9, CXCL10 and CXCL11 on the proliferation, survival and angiogenic activity of human microvascular endothelial cells (HMVEC) through a cAMP-mediated signaling pathway. Does not promote cell chemotaxis respons. Interaction with CXCL4 or CXCL10 leads to activation of the p38MAPK pathway and contributes to inhibition of angiogenesis. Overexpression in renal cancer cells down-regulates expression of the anti-apoptotic protein HMOX1 and promotes apoptosis. In terms of biological role, mediates the activity of CXCL11. This is C-X-C chemokine receptor type 3 (CXCR3) from Homo sapiens (Human).